Here is a 997-residue protein sequence, read N- to C-terminus: Sorting nexin-19 (997 aa).

In terms of domain architecture, PXA spans 95 to 273 (ERQLEQEINR…ILVSIFSKYR (179 aa)). Disordered stretches follow at residues 313 to 333 (SSPA…SPEI) and 413 to 437 (GALE…APGT). Acidic residues predominate over residues 422-435 (GSECMEGAEAEEAP). The PX domain occupies 538 to 668 (LRITGTITAR…EFLALNTDAR (131 aa)). A 1,2-diacyl-sn-glycero-3-phospho-(1D-myo-inositol-3-phosphate) is bound by residues R587 and R634. Positions 697-728 (FPRSEPQSPTEELSEAENESKPQTEGKKASKS) are disordered. A compositionally biased stretch (basic and acidic residues) spans 714–724 (NESKPQTEGKK).

This sequence belongs to the sorting nexin family. As to quaternary structure, interacts with PTPRN.

It is found in the early endosome membrane. The protein resides in the cytoplasmic vesicle membrane. Functionally, plays a role in intracellular vesicle trafficking and exocytosis. May play a role in maintaining insulin-containing dense core vesicles in pancreatic beta-cells and in preventing their degradation. May play a role in insulin secretion. Interacts with membranes containing phosphatidylinositol 3-phosphate (PtdIns(3P)). This chain is Sorting nexin-19, found in Mus musculus (Mouse).